The sequence spans 1247 residues: ABC transporter B family member 14 (1247 aa).

The ABC transmembrane type-1 1 domain maps to 48 to 337 (MFLGGLGTCI…AVPSLSAISK (290 aa)). The next 6 helical transmembrane spans lie at 49-69 (FLGG…FVFF), 95-115 (LYLV…VACW), 172-192 (HVLR…LSVW), 196-216 (LLTL…AIVM), 277-297 (LGVG…FWYA), and 315-335 (ILNV…LSAI). 2 N-linked (GlcNAc...) asparagine glycosylation sites follow: Asn362 and Asn392. The ABC transporter 1 domain occupies 373-608 (IEFCGVSFAY…GGDYATLVNC (236 aa)). Residue 407-414 (GPSGSGKS) participates in ATP binding. The region spanning 679-971 (EWLYALLGSI…TLALTPDIVK (293 aa)) is the ABC transmembrane type-1 2 domain. 2 consecutive transmembrane segments (helical) span residues 680-700 (WLYA…PALF) and 727-747 (AIIF…QHYF). Asn780 is a glycosylation site (N-linked (GlcNAc...) asparagine). Transmembrane regions (helical) follow at residues 807 to 824 (IVQN…AFFY), 830 to 850 (AVVT…QLFL), and 915 to 935 (LSQC…SVLI). Asn938 is a glycosylation site (N-linked (GlcNAc...) asparagine). Residues 949-969 (FMVLLVTAYSVAETLALTPDI) form a helical membrane-spanning segment. Residues 1006 to 1242 (IEFRNVSFAY…SDGFYKKLTS (237 aa)) enclose the ABC transporter 2 domain. Residue Asn1010 is glycosylated (N-linked (GlcNAc...) asparagine). 1041–1048 (GPSGSGKS) is an ATP binding site. Asn1108 is a glycosylation site (N-linked (GlcNAc...) asparagine).

The protein belongs to the ABC transporter superfamily. ABCB family. Multidrug resistance exporter (TC 3.A.1.201) subfamily.

The protein localises to the membrane. The chain is ABC transporter B family member 14 (ABCB14) from Arabidopsis thaliana (Mouse-ear cress).